The primary structure comprises 2000 residues: Sodium channel protein type 3 subunit alpha (2000 aa).

Residues 1–128 (MAQALLVPPG…KIAIKILVHS (128 aa)) are Cytoplasmic-facing. The interval 28–60 (RAAEEKAKKPKKEQDNDDENKPKPNSDLEAGKN) is disordered. Positions 46–57 (ENKPKPNSDLEA) are enriched in basic and acidic residues. The I repeat unit spans residues 110–455 (ILTPLNPVRK…QQMLEQLKKQ (346 aa)). A helical membrane pass occupies residues 129–146 (LFSMLIMCTILTNCVFMT). At 147–152 (LSNPPD) the chain is on the extracellular side. The chain crosses the membrane as a helical span at residues 153–174 (WTKNVEYTFTGIYTFESLIKIL). The Cytoplasmic segment spans residues 175–188 (ARGFCLEDFTFLRD). Residues 189–206 (PWNWLDFSVIVMAYVTEF) traverse the membrane as a helical segment. Topologically, residues 207 to 213 (VSLGNVS) are extracellular. N211 carries an N-linked (GlcNAc...) asparagine glycan. The helical transmembrane segment at 214–235 (ALRTFRVLRALKTISVIPGLKT) threads the bilayer. At 236–249 (IVGALIQSVKKLSD) the chain is on the cytoplasmic side. Residues 250–269 (VMILTVFCLSVFALIGLQLF) traverse the membrane as a helical segment. Topologically, residues 270–369 (MGNLRNKCLQ…NYGYTSFDTF (100 aa)) are extracellular. N-linked (GlcNAc...) asparagine glycans are attached at residues N290, N296, N302, N307, and N339. The segment at residues 370–386 (SWAFLSLFRLMTQDYWE) is an intramembrane region (pore-forming). Over 387–397 (NLYQLTLRAAG) the chain is Extracellular. The chain crosses the membrane as a helical span at residues 398-424 (KTYMIFFVLVIFLGSFYLVNLILAVVA). At 425–761 (MAYEEQNQAT…LVNLIVMDPF (337 aa)) the chain is on the cytoplasmic side. A phosphoserine mark is found at S484, S485, and S486. Disordered regions lie at residues 493 to 528 (SKSA…KSES), 587 to 631 (VGSE…ASMS), and 662 to 681 (ALTS…ETEV). Residues 500–509 (RNRRKKRRQR) show a composition bias toward basic residues. Composition is skewed to basic and acidic residues over residues 510-528 (EHLE…KSES) and 596-610 (DEHS…RRDS). The segment covering 662-678 (ALTSPTGQLPPEGTTTE) has biased composition (polar residues). The II repeat unit spans residues 742–1014 (CCDAWLKVKH…QIAVGRMQKG (273 aa)). Residues 762-779 (VDLAITICIVLNTLFMAM) traverse the membrane as a helical segment. Residues 780–787 (EHYPMTEQ) lie on the Extracellular side of the membrane. Residues 788 to 812 (FSSVLTVGNLVFTGIFTAEMVLKII) traverse the membrane as a helical segment. Over 813 to 822 (AMDPYYYFQE) the chain is Cytoplasmic. A helical membrane pass occupies residues 823–842 (GWNIFDGIIVSLSLMELGLS). The Extracellular segment spans residues 843–846 (NVEG). A helical transmembrane segment spans residues 847-865 (LSVLRSFRLLRVFKLAKSW). Residues 866–883 (PTLNMLIKIIGNSVGALG) are Cytoplasmic-facing. A helical transmembrane segment spans residues 884-904 (NLTLVLAIIVFIFAVVGMQLF). Residues 905–929 (GKSYKECVCKINDDCTLPRWHMNDF) lie on the Extracellular side of the membrane. A disulfide bond links C913 and C919. An intramembrane region (pore-forming) is located at residues 930 to 945 (FHSFLIVFRVLCGEWI). Residues 946-956 (ETMWDCMEVAG) lie on the Extracellular side of the membrane. An intrachain disulfide couples C951 to C960. Residues 957-983 (QTMCLIVFMLVMVIGNLVVLNLFLALL) traverse the membrane as a helical segment. Residues 984 to 1205 (LSSFSSDNLA…RKTCYSIVEH (222 aa)) are Cytoplasmic-facing. Residues 1118-1162 (EEFSSESELEESKEKLNATSSSEGSTVDVVLPREGEQAETEPEED) form a disordered region. The III repeat unit spans residues 1188–1499 (KGKIWWNLRK…KKYYNAMKKL (312 aa)). Residues 1206-1226 (NWFETFIVFMILLSSGALAFE) form a helical membrane-spanning segment. Topologically, residues 1227 to 1238 (DIYIEQRKTIKT) are extracellular. A helical membrane pass occupies residues 1239 to 1260 (MLEYADKVFTYIFILEMLLKWV). The Cytoplasmic portion of the chain corresponds to 1261-1266 (AYGFQT). The chain crosses the membrane as a helical span at residues 1267 to 1292 (YFTNAWCWLDFLIVDVSLVSLVANAL). Residues 1293–1301 (GYSELGAIK) lie on the Extracellular side of the membrane. The chain crosses the membrane as a helical span at residues 1302-1320 (SLRTLRALRPLRALSRFEG). Residues 1321-1333 (MRVVVNALVGAIP) lie on the Cytoplasmic side of the membrane. Residues 1334-1356 (SIMNVLLVCLIFWLIFSIMGVNL) form a helical membrane-spanning segment. Topologically, residues 1357–1402 (FAGKFYHCVNMTTGNMFDISDVNNLSDCQALGKQARWKNVKVNFDN) are extracellular. C1364 and C1384 are joined by a disulfide. N-linked (GlcNAc...) asparagine glycosylation is found at N1366 and N1380. An intramembrane region (pore-forming) is located at residues 1403 to 1419 (VGAGYLALLQVATFKGW). Over 1420-1442 (MDIMYAAVDSRDVKLQPVYEENL) the chain is Extracellular. The helical transmembrane segment at 1443–1468 (YMYLYFVIFIIFGSFFTLNLFIGVII) threads the bilayer. Topologically, residues 1469-1526 (DNFNQQKKKFGGQDIFMTEEQKKYYNAMKKLGSKKPQKPIPRPANKFQGMVFDFVTRQ) are cytoplasmic. At S1501 the chain carries Phosphoserine; by PKC. Residues 1508–1806 (IPRPANKFQG…WEKFDPDATQ (299 aa)) form an IV repeat. The helical transmembrane segment at 1527–1545 (VFDISIMILICLNMVTMMV) threads the bilayer. At 1546–1553 (ETDDQGKY) the chain is on the extracellular side. Residues 1554 to 1577 (MTLVLSRINLVFIVLFTGEFVLKL) traverse the membrane as a helical segment. Topologically, residues 1578–1587 (VSLRHYYFTI) are cytoplasmic. A helical transmembrane segment spans residues 1588–1605 (GWNIFDFVVVILSIVGMF). The Extracellular portion of the chain corresponds to 1606–1617 (LAEMIEKYFVSP). The chain crosses the membrane as a helical span at residues 1618-1640 (TLFRVIRLARIGRILRLIKGAKG). Residues 1641 to 1653 (IRTLLFALMMSLP) are Cytoplasmic-facing. The helical transmembrane segment at 1654–1677 (ALFNIGLLLFLVMFIYAIFGMSNF) threads the bilayer. At 1678–1699 (AYVKKEAGIDDMFNFETFGNSM) the chain is on the extracellular side. Positions 1700-1712 (ICLFQITTSAGWD) form an intramembrane region, pore-forming. Residues 1713–1744 (GLLAPILNSAPPDCDPDTIHPGSSVKGDCGNP) lie on the Extracellular side of the membrane. Residues 1745 to 1770 (SVGIFFFVSYIIISFLVVVNMYIAVI) traverse the membrane as a helical segment. The Cytoplasmic segment spans residues 1771 to 2000 (LENFSVATEE…KGKEVRENQK (230 aa)). An IQ domain is found at 1900–1929 (EEVSAAIIQRNFRCYLLKQRLKNISSNYNK). A disordered region spans residues 1949 to 2000 (LNGNSTPEKTDGSSSTTSPPSYDSVTKPDKEKFEKDKPEKESKGKEVRENQK). Residues 1974–2000 (TKPDKEKFEKDKPEKESKGKEVRENQK) are compositionally biased toward basic and acidic residues.

It belongs to the sodium channel (TC 1.A.1.10) family. Nav1.3/SCN3A subfamily. Heterooligomer of an alpha subunit, SCN3A, and 1 to 3 regulatory beta subunits including SCN1B and SCN2B; disulfide-linked with some beta subunits like SCN2B. Interacts with NEDD4L; could regulate expression of SCN3A at the plasma membrane through ubiquitination-regulated endocytosis. Interacts with the conotoxin GVIIJ. In terms of processing, may be ubiquitinated by NEDD4L; which would promote its endocytosis. Post-translationally, phosphorylation at Ser-1501 by PKC in a highly conserved cytoplasmic loop slows inactivation of the sodium channel and reduces peak sodium currents. As to expression, expressed in enterochromaffin cells in both colon and small bowel (at protein level).

It is found in the cell membrane. It localises to the basal cell membrane. The catalysed reaction is Na(+)(in) = Na(+)(out). Its function is as follows. Pore-forming subunit of Nav1.3, a voltage-gated sodium (Nav) channel that directly mediates the depolarizing phase of action potentials in excitable membranes. Navs, also called VGSCs (voltage-gated sodium channels) or VDSCs (voltage-dependent sodium channels), operate by switching between closed and open conformations depending on the voltage difference across the membrane. In the open conformation they allow Na(+) ions to selectively pass through the pore, along their electrochemical gradient. The influx of Na+ ions provokes membrane depolarization, initiating the propagation of electrical signals throughout cells and tissues. In some secretory cell types, it also participates in cell excitability through membrane depolarization and regulates cells responsiveness to stimuli triggering secretion. For instance, it controls the release of serotonin/5-hydroxytryptamine by enterochromaffin cells and is required for both glucagon- and glucose-induced insulin secretion in pancreatic endocrine cells. The protein is Sodium channel protein type 3 subunit alpha of Homo sapiens (Human).